The chain runs to 104 residues: Iron-sulfur cluster assembly protein CyaY (104 aa).

The protein belongs to the frataxin family.

Functionally, involved in iron-sulfur (Fe-S) cluster assembly. May act as a regulator of Fe-S biogenesis. The chain is Iron-sulfur cluster assembly protein CyaY from Aliivibrio fischeri (strain MJ11) (Vibrio fischeri).